A 491-amino-acid chain; its full sequence is Cysteine--tRNA ligase (491 aa).

Cys-29 is a binding site for Zn(2+). Residues Pro-31 to Asn-41 carry the 'HIGH' region motif. Zn(2+) contacts are provided by Cys-227, His-252, and Glu-256. The 'KMSKS' region motif lies at Lys-285–Ser-289. Residue Lys-288 coordinates ATP.

This sequence belongs to the class-I aminoacyl-tRNA synthetase family. In terms of assembly, monomer. The cofactor is Zn(2+).

The protein resides in the cytoplasm. It carries out the reaction tRNA(Cys) + L-cysteine + ATP = L-cysteinyl-tRNA(Cys) + AMP + diphosphate. The polypeptide is Cysteine--tRNA ligase (Rhodopseudomonas palustris (strain TIE-1)).